A 119-amino-acid chain; its full sequence is MVKLAFPRELRLLTPAHFTFVFQQPQRAGTPQITILGRLNSLGHPRIGLTVAKKNVKRAHERNRIKRLTRESFRLRQHELPPMDFVVVAKRGIADLDNRELSEALEKLWRRHCRLVRGS.

Belongs to the RnpA family. In terms of assembly, consists of a catalytic RNA component (M1 or rnpB) and a protein subunit.

It carries out the reaction Endonucleolytic cleavage of RNA, removing 5'-extranucleotides from tRNA precursor.. RNaseP catalyzes the removal of the 5'-leader sequence from pre-tRNA to produce the mature 5'-terminus. It can also cleave other RNA substrates such as 4.5S RNA. The protein component plays an auxiliary but essential role in vivo by binding to the 5'-leader sequence and broadening the substrate specificity of the ribozyme. The polypeptide is Ribonuclease P protein component (Cronobacter sakazakii (strain ATCC BAA-894) (Enterobacter sakazakii)).